The chain runs to 452 residues: Plasmepsin I (452 aa).

Topologically, residues 1-37 (MALSIKEDFSSAFAKNESAVNSSTFNNNMKTWKIQKR) are cytoplasmic. A propeptide spanning residues 1–123 (MALSIKEDFS…TGLTQKPHLG (123 aa)) is cleaved from the precursor. The chain crosses the membrane as a helical; Signal-anchor for type II membrane protein span at residues 38–58 (FQILYVFFFLLITGALFYYLI). Topologically, residues 59 to 452 (DNVLFPKNKK…VGFALAKKKL (394 aa)) are lumenal. The Peptidase A1 domain maps to 139–446 (YYGEAQIGDN…DYDNHTVGFA (308 aa)). The active site involves aspartate 157. An intrachain disulfide couples cysteine 170 to cysteine 175. The active site involves aspartate 337. Cysteines 372 and 408 form a disulfide.

Belongs to the peptidase A1 family. In terms of processing, not N-glycosylated. Proteolytically cleaved into the soluble active mature form in the digestive vacuole by cysteine protease falcipains; the process begins at the early ring stage. Proteolysis requires an acidic environment.

It localises to the membrane. The protein localises to the vacuole lumen. It is found in the vacuole membrane. The catalysed reaction is Hydrolysis of the 33-Phe-|-Leu-34 bond in the alpha-chain of hemoglobin, leading to denaturation of molecule.. Inhibited by KNI derived compounds KNI-10333 and to a lesser extent KNI-10743. In terms of biological role, during the asexual blood stage, catalyzes the initial cleavage of native host hemoglobin (Hb) resulting in Hb denaturation; specifically cleaves between Phe-33 and Leu-34 of Hb alpha-chain. Digestion of host Hb is an essential step which provides the parasite with amino acids for protein synthesis, and regulates osmolarity. This Plasmodium falciparum (isolate 3D7) protein is Plasmepsin I.